Reading from the N-terminus, the 213-residue chain is Pyrrolidone-carboxylate peptidase (213 aa).

Residues Glu-78, Cys-141, and His-165 contribute to the active site.

It belongs to the peptidase C15 family. Homotetramer.

It is found in the cytoplasm. It carries out the reaction Release of an N-terminal pyroglutamyl group from a polypeptide, the second amino acid generally not being Pro.. Its function is as follows. Removes 5-oxoproline from various penultimate amino acid residues except L-proline. The protein is Pyrrolidone-carboxylate peptidase of Clostridium perfringens (strain SM101 / Type A).